The following is a 944-amino-acid chain: UvrABC system protein A (944 aa).

Glycine 33–serine 40 is a binding site for ATP. The C4-type zinc finger occupies cysteine 252–cysteine 279. ABC transporter domains follow at residues tryptophan 309–leucine 587 and isoleucine 607–lysine 935. Glycine 639–serine 646 provides a ligand contact to ATP. Residues cysteine 738–cysteine 764 form a C4-type zinc finger.

The protein belongs to the ABC transporter superfamily. UvrA family. Forms a heterotetramer with UvrB during the search for lesions.

The protein localises to the cytoplasm. Its function is as follows. The UvrABC repair system catalyzes the recognition and processing of DNA lesions. UvrA is an ATPase and a DNA-binding protein. A damage recognition complex composed of 2 UvrA and 2 UvrB subunits scans DNA for abnormalities. When the presence of a lesion has been verified by UvrB, the UvrA molecules dissociate. The polypeptide is UvrABC system protein A (Staphylococcus epidermidis (strain ATCC 12228 / FDA PCI 1200)).